The chain runs to 254 residues: tRNA (guanine-N(1)-)-methyltransferase (254 aa).

S-adenosyl-L-methionine is bound by residues G117 and 136–141; that span reads LGDFVL.

Belongs to the RNA methyltransferase TrmD family. In terms of assembly, homodimer.

The protein localises to the cytoplasm. The catalysed reaction is guanosine(37) in tRNA + S-adenosyl-L-methionine = N(1)-methylguanosine(37) in tRNA + S-adenosyl-L-homocysteine + H(+). Functionally, specifically methylates guanosine-37 in various tRNAs. The polypeptide is tRNA (guanine-N(1)-)-methyltransferase (Levilactobacillus brevis (strain ATCC 367 / BCRC 12310 / CIP 105137 / JCM 1170 / LMG 11437 / NCIMB 947 / NCTC 947) (Lactobacillus brevis)).